We begin with the raw amino-acid sequence, 1038 residues long: P3N-PIPO polyprotein (1038 aa).

A Peptidase S30 domain is found at 170-313 (LVAKSDFDDL…AGDVGRTMHY (144 aa)). Residues His224, Glu233, and Ser266 each act as for P1 proteinase activity in the active site. The Involved in interaction with stylet and aphid transmission signature appears at 365–368 (KMAC). Residues 622–624 (PTK) carry the Involved in virions binding and aphid transmission motif. The region spanning 648 to 770 (MYIAKEGYCY…EGEMKWYRVG (123 aa)) is the Peptidase C6 domain. Residues Cys656 and His729 each act as for helper component proteinase activity in the active site.

The protein belongs to the potyviridae P3N-PIPO polyprotein family. Interacts (via PIPO domain) with host PCaP1 protein; this interaction may help to anchor the movement complex to the plasma membrane from which the complex could move to the plasmodesmata. Post-translationally, potyviral RNA is expressed as two polyproteins which undergo post-translational proteolytic processing. Genome polyprotein is processed by NIa-pro, P1 and HC-pro proteinases resulting in the production of at least ten individual proteins. P3N-PIPO is cleaved by P1 and HC-pro proteinases resulting in the production of three individual proteins. The P1 proteinase and the HC-pro cleave only their respective C-termini autocatalytically.

It is found in the host cell junction. The protein localises to the host plasmodesma. The enzyme catalyses Hydrolyzes a Gly-|-Gly bond at its own C-terminus, commonly in the sequence -Tyr-Xaa-Val-Gly-|-Gly, in the processing of the potyviral polyprotein.. Functionally, required for aphid transmission and also has proteolytic activity. Only cleaves a Gly-Gly dipeptide at its own C-terminus. Interacts with virions and aphid stylets. Acts as a suppressor of RNA-mediated gene silencing, also known as post-transcriptional gene silencing (PTGS), a mechanism of plant viral defense that limits the accumulation of viral RNAs. May have RNA-binding activity. Its function is as follows. Allows efficient cell to cell propagation, by bypassing the host cell wall barrier. Transports viral genome to neighboring plant cells directly through plasmosdesmata, without any budding. This chain is P3N-PIPO polyprotein, found in Beet mosaic virus (BtMV).